A 182-amino-acid chain; its full sequence is Peptidoglycan-recognition protein SB2 (182 aa).

An N-terminal signal peptide occupies residues 1 to 17 (MKLQLALVLCGLTLALG). In terms of domain architecture, N-acetylmuramoyl-L-alanine amidase spans 40–165 (PVRLIIIHHT…CQTKATACPG (126 aa)). Zn(2+) is bound at residue His47. A disulfide bridge connects residues Cys54 and Cys60. An N-linked (GlcNAc...) asparagine glycan is attached at Asn149. Zn(2+)-binding residues include His155 and Cys163.

It belongs to the N-acetylmuramoyl-L-alanine amidase 2 family. The cofactor is Zn(2+).

It localises to the secreted. It carries out the reaction Hydrolyzes the link between N-acetylmuramoyl residues and L-amino acid residues in certain cell-wall glycopeptides.. In terms of biological role, N-acetylmuramyl-L-alanine amidase involved in innate immunity by degrading bacterial peptidoglycans (PGN). Probably plays a scavenger role by digesting biologically active PGN into biologically inactive fragments. Has no direct bacteriolytic activity. The sequence is that of Peptidoglycan-recognition protein SB2 (PGRP-SB2) from Drosophila simulans (Fruit fly).